A 415-amino-acid polypeptide reads, in one-letter code: Probable glucuronosyltransferase Os01g0926600 (415 aa).

Over 1–4 the chain is Cytoplasmic; sequence MAMR. Residues 5 to 25 traverse the membrane as a helical; Signal-anchor for type II membrane protein segment; it reads LSSAAVALALLLAATALEDVA. The Lumenal segment spans residues 26–415; it reads RGQDTERIEG…QGPVGDLKPW (390 aa). N-linked (GlcNAc...) asparagine glycans are attached at residues Asn-142 and Asn-403.

Belongs to the glycosyltransferase 47 family.

It is found in the golgi apparatus membrane. Its function is as follows. Involved in the synthesis of glucuronoxylan hemicellulose in secondary cell walls. The sequence is that of Probable glucuronosyltransferase Os01g0926600 from Oryza sativa subsp. japonica (Rice).